Here is a 123-residue protein sequence, read N- to C-terminus: MDNKTYEISSAEWEVMNIIWMKKYASANNIIEEIQMQKDWSPKTIRTLITRLYKKGFIDRKKDNKIFQYYSLVEESDIKYKTSKNFINKVYKGGFNSLVLNFVEKEDLSQDEIEELRNILNKK.

The segment at residues 7–71 (EISSAEWEVM…KDNKIFQYYS (65 aa)) is a DNA-binding region (H-T-H motif). The segment at 74 to 123 (EESDIKYKTSKNFINKVYKGGFNSLVLNFVEKEDLSQDEIEELRNILNKK) is important for dimerization.

It belongs to the BlaI transcriptional regulatory family. As to quaternary structure, monomer and homodimer. Upon exposure to beta-lactams, proteolytic cleavage at a single site impairs dimerization and abolishes repressor activity.

Its subcellular location is the cytoplasm. Its function is as follows. Transcriptional repressor that constitutively blocks the transcription of the gene for the penicillin-binding protein MecA. Binds palindromic DNA with the sequence 5'-TACA-[AT]-N-TGTA-3'. Regulates genes involved in antibiotic resistance. Binds DNA as a dimer. The sequence is that of Methicillin resistance regulatory protein MecI (mecI) from Staphylococcus aureus (strain N315).